The chain runs to 313 residues: Probable cell division protein WhiA (313 aa).

Positions 274 to 308 form a DNA-binding region, H-T-H motif; that stretch reads SLKELGELVPGGPISKSGVNHRLRKLNAYADELRA.

The protein belongs to the WhiA family.

In terms of biological role, involved in cell division and chromosome segregation. This Limosilactobacillus reuteri subsp. reuteri (strain JCM 1112) (Lactobacillus reuteri) protein is Probable cell division protein WhiA.